A 560-amino-acid chain; its full sequence is Hemocyanin, units G and H (560 aa).

A disulfide bridge links C1 with C11. The interval 1-184 is unit G; that stretch reads CPTPDAPQYA…AKGLVSQHIE (184 aa). Residues 12–14 constitute a cross-link (2'-(S-cysteinyl)-histidine (Cys-His)); sequence CLH. C93 and C98 are disulfide-bonded. An N-linked (GlcNAc...) asparagine glycan is attached at N142. Positions 185–560 are unit H; sequence DHDTETLIRK…KPGTGTQLTR (376 aa). Residue H230 participates in Cu cation binding. A disulfide bond links C236 and C246. N-linked (GlcNAc...) asparagine glycosylation is present at N240. The 2'-(S-cysteinyl)-histidine (Cys-His) cross-link spans 247–249; the sequence is CQH. The Cu cation site is built by H249, H258, H358, H362, and H389. 2 disulfides stabilise this stretch: C348–C415 and C476–C482.

The protein belongs to the tyrosinase family. Hemocyanin subfamily. In terms of assembly, decamers of large identical subunits (390 kDa), each containing 8 globular oxygen-binding functional units. Requires Cu(2+) as cofactor.

In terms of biological role, hemocyanins are copper-containing oxygen carriers occurring freely dissolved in the hemolymph of many mollusks and arthropods. This chain is Hemocyanin, units G and H, found in Sepia officinalis (Common cuttlefish).